The following is a 247-amino-acid chain: Capsid protein (247 aa).

A DNA-binding region spans residues 1 to 40; that stretch reads MWGTSNCACAKFQIRRRYARPYRRRHIRRYRRRRRHFRRR. The interval 15–44 is nuclear localization signals; the sequence is RRRYARPYRRRHIRRYRRRRRHFRRRRFTT.

It belongs to the circoviridae capsid protein family. Homomultimer. Assembles in the nucleus, presumably in an immature form, then migrates to the cytoplasm once assembled as mature virion. Interacts with Rep; this interaction relocates Rep into the nucleus.

The protein resides in the host nucleus. It is found in the virion. In terms of biological role, self-assembles to form the virion icosahedral capsid with a T=1 symmetry. This very small capsid (17 - 22 nm in diameter) allows the virus to be very stable in the environment and resistant to some disinfectants, including detergents. Essential for the initial attachment to heparan sulfate moieties and chondroitin sulfate B of the host cell surface proteoglycans. After attachment, the virus is endocytosed and traffics to the nucleus. The capsid protein binds and transports the viral genome and Rep across the nuclear envelope. In Beak and feather disease virus (BFDV), this protein is Capsid protein (Cap).